Reading from the N-terminus, the 91-residue chain is Probable Fe(2+)-trafficking protein (91 aa).

The protein belongs to the Fe(2+)-trafficking protein family.

Its function is as follows. Could be a mediator in iron transactions between iron acquisition and iron-requiring processes, such as synthesis and/or repair of Fe-S clusters in biosynthetic enzymes. This Cellvibrio japonicus (strain Ueda107) (Pseudomonas fluorescens subsp. cellulosa) protein is Probable Fe(2+)-trafficking protein.